A 209-amino-acid polypeptide reads, in one-letter code: MRGLNLKPSRVYQTAAALLESESISQAPPWYKTIGSVPPSEILTRTQPVQHRGSNGRPRTKKASKLFKPQTIVYEEDRIRQEFFRDHPWELARPRIVLENDGRDGQRCDWTRKEFYALRQEEEIERRIAKEEAEYVGAYFHKGALEVGMELEDKSYEDWKAWATKEVEAANLLKQGAYTGVGAESEDADVLDEAAEADEGVEEPATVVA.

Belongs to the mitochondrion-specific ribosomal protein mS23 family. Component of the mitochondrial small ribosomal subunit.

Its subcellular location is the mitochondrion. This is Small ribosomal subunit protein mS23 (rsm25) from Sclerotinia sclerotiorum (strain ATCC 18683 / 1980 / Ss-1) (White mold).